We begin with the raw amino-acid sequence, 189 residues long: Glucose-6-phosphate isomerase (189 aa).

Fe cation contacts are provided by His88, His90, Glu97, and His136.

The protein belongs to the archaeal-type GPI family. In terms of assembly, homodimer. It depends on Fe cation as a cofactor.

Its subcellular location is the cytoplasm. The enzyme catalyses alpha-D-glucose 6-phosphate = beta-D-fructose 6-phosphate. It functions in the pathway carbohydrate degradation; glycolysis; D-glyceraldehyde 3-phosphate and glycerone phosphate from D-glucose: step 2/4. This chain is Glucose-6-phosphate isomerase (pgiA), found in Pyrococcus abyssi (strain GE5 / Orsay).